The chain runs to 385 residues: MSKRDYYEVLGVSKGASADEIKKGFRKKAKELHPDRNADNPDAEAQFKEANEAYDVLKDPERKAAYDRYGHAAFENGMGGGGGGRAGGHPGGDFSSAFSDVFDDLFGDFMGGGGGRAGARQRATRGADLRYNLRLSLEEAFAGLHKTINVPTSVSCTSCEGTGAEGGAEPTTCPTCSGMGKVRAQQGFFTVERTCPTCSGLGQMIKNPCKTCNGHGRVEKDRSLSVNIPAGVETGTRIRLAGEGEAGLRGGPPGDLYIFIEVARHELFEREGNNLHCRVPVSMAKAALGGAIEVPTIDGGRGRVQIPEGSQSGRQMRLRGKGMPALRGGGTGDMFIELAVETPVNLTPRQKEILKEFDEISEENTNPETRSFFSSVKSFWDGMKG.

A J domain is found at 5–70; that stretch reads DYYEVLGVSK…ERKAAYDRYG (66 aa). The segment at 143 to 221 adopts a CR-type zinc-finger fold; the sequence is GLHKTINVPT…CNGHGRVEKD (79 aa). Residues Cys156, Cys159, Cys173, Cys176, Cys195, Cys198, Cys209, and Cys212 each coordinate Zn(2+). CXXCXGXG motif repeat units lie at residues 156-163, 173-180, 195-202, and 209-216; these read CTSCEGTG, CPTCSGMG, CPTCSGLG, and CKTCNGHG.

It belongs to the DnaJ family. In terms of assembly, homodimer. Requires Zn(2+) as cofactor.

The protein resides in the cytoplasm. Participates actively in the response to hyperosmotic and heat shock by preventing the aggregation of stress-denatured proteins and by disaggregating proteins, also in an autonomous, DnaK-independent fashion. Unfolded proteins bind initially to DnaJ; upon interaction with the DnaJ-bound protein, DnaK hydrolyzes its bound ATP, resulting in the formation of a stable complex. GrpE releases ADP from DnaK; ATP binding to DnaK triggers the release of the substrate protein, thus completing the reaction cycle. Several rounds of ATP-dependent interactions between DnaJ, DnaK and GrpE are required for fully efficient folding. Also involved, together with DnaK and GrpE, in the DNA replication of plasmids through activation of initiation proteins. The sequence is that of Chaperone protein DnaJ from Ruegeria sp. (strain TM1040) (Silicibacter sp.).